Here is a 349-residue protein sequence, read N- to C-terminus: ALA-interacting subunit 3 (349 aa).

The span at Met1–Ala21 shows a compositional bias: low complexity. Residues Met1–Tyr30 are disordered. Ser2 carries the post-translational modification N-acetylserine. Residues Val50 to Phe70 form a helical membrane-spanning segment. N-linked (GlcNAc...) asparagine glycosylation is found at Asn181, Asn190, and Asn223. Residues Leu305 to Ile325 form a helical membrane-spanning segment.

This sequence belongs to the CDC50/LEM3 family. As to quaternary structure, interacts with ALA2 and ALA3 in a heterologous system. Expressed in roots, leaves, stems, flowers and siliques.

It is found in the golgi apparatus membrane. The protein resides in the prevacuolar compartment membrane. The protein localises to the endoplasmic reticulum membrane. Required for the lipid transport activity of the ALA/ALIS P4-ATPase complex. The polypeptide is ALA-interacting subunit 3 (ALIS3) (Arabidopsis thaliana (Mouse-ear cress)).